A 731-amino-acid polypeptide reads, in one-letter code: Ribonuclease R (731 aa).

The RNB domain maps to 260-589; it reads RTDLRHFPFF…LHRVIKYLLF (330 aa). Residues 647-728 form the S1 motif domain; the sequence is GCILNGVISN…NEKKIELSLY (82 aa).

The protein belongs to the RNR ribonuclease family. RNase R subfamily. Monomer.

It is found in the cytoplasm. It carries out the reaction Exonucleolytic cleavage in the 3'- to 5'-direction to yield nucleoside 5'-phosphates.. Its function is as follows. 3'-5' exoribonuclease that releases 5'-nucleoside monophosphates and is involved in maturation of structured RNAs. The polypeptide is Ribonuclease R (Buchnera aphidicola subsp. Acyrthosiphon pisum (strain APS) (Acyrthosiphon pisum symbiotic bacterium)).